The chain runs to 575 residues: MSRSPDAKEDPVECPLCMEPLEIDDINFFPCTCGYQICRFCWHRIRTDENGLCPACRKPYPEDPAVYKPLSQEELQRIKNEKKQKQNERKQKISENRKHLASVRVVQKNLVFVVGLSQRLADPEVLKRPEYFGKFGKIHKVVINNSTSYAGSQGPSASAYVTYIRSEDALRAIQCVNNVVVDGRTLKASLGTTKYCSYFLKNMQCPKPDCMYLHELGDEAASFTKEEMQAGKHQEYEQKLLQELYKLNPNFLQLSTGSVDKNKNKVTPLQRYDTPIDKPSDSLSIGNGDNSQQISNSDTPSPPPGLSKSNPVIPISSSNHSARSPFEGAVTESQSLFSDNFRHPNPIPSGLPPFPSSPQTSSDWPTAPEPQSLFTSETIPVSSSTDWQAAFGFGSSKQPEDDLGFDPFDVTRKALADLIEKELSVQDQPSLSPTSLQNSSSHTTTAKGPGSGFLHPAAATNANSLNSTFSVLPQRFPQFQQHRAVYNSFSFPGQAARYPWMAFPRNSIMHLNHTANPTSNSNFLDLNLPPQHNTGLGGIPVAGEEEVKVSTMPLSTSSHSLQQGQQPTSLHTTVA.

Residues 14–57 (CPLCMEPLEIDDINFFPCTCGYQICRFCWHRIRTDENGLCPACR) form an RING-type; degenerate zinc finger. A coiled-coil region spans residues 68 to 104 (KPLSQEELQRIKNEKKQKQNERKQKISENRKHLASVR). Ser-71 carries the post-translational modification Phosphoserine. Positions 109-189 (NLVFVVGLSQ…VVDGRTLKAS (81 aa)) constitute an RRM domain. The C3H1-type zinc-finger motif lies at 190-217 (LGTTKYCSYFLKNMQCPKPDCMYLHELG). Disordered stretches follow at residues 256 to 372 (TGSV…EPQS) and 424 to 458 (SVQD…HPAA). Polar residues predominate over residues 281-299 (DSLSIGNGDNSQQISNSDT). Ser-301 carries the post-translational modification Phosphoserine. The span at 307 to 322 (SKSNPVIPISSSNHSA) shows a compositional bias: polar residues. Ser-324 carries the phosphoserine modification. A compositionally biased stretch (pro residues) spans 345 to 356 (NPIPSGLPPFPS). Low complexity predominate over residues 428 to 441 (QPSLSPTSLQNSSS). Ser-432 carries the post-translational modification Phosphoserine. An asymmetric dimethylarginine mark is found at Arg-475 and Arg-483. Ser-490 carries the post-translational modification Phosphoserine. Arg-497 is subject to Asymmetric dimethylarginine. The segment at 553–575 (PLSTSSHSLQQGQQPTSLHTTVA) is disordered.

In terms of assembly, interacts with CNOT1 via its C-terminus but does not stably associate with the CCR4-NOT complex. Interacts (via RING domain) with UBE2D2. Interacts with ABCE1, PINK1 and PELO. Autoubiquitinated.

The protein resides in the cytoplasm. Its subcellular location is the nucleus. It carries out the reaction S-ubiquitinyl-[E2 ubiquitin-conjugating enzyme]-L-cysteine + [acceptor protein]-L-lysine = [E2 ubiquitin-conjugating enzyme]-L-cysteine + N(6)-ubiquitinyl-[acceptor protein]-L-lysine.. It functions in the pathway protein modification; protein ubiquitination. Has E3 ubiquitin ligase activity, promoting ubiquitination and degradation of target proteins. Involved in activation of the JAK/STAT pathway. Catalyzes ubiquitination of methylated RBM15. Plays a role in quality control of translation of mitochondrial outer membrane-localized mRNA. As part of the PINK1-regulated signaling, upon mitochondria damage, ubiquitinates ABCE1 and thereby recruits autophagy receptors to the mitochondrial outer membrane to initiate mitophagy. This is CCR4-NOT transcription complex subunit 4 (CNOT4) from Homo sapiens (Human).